The chain runs to 164 residues: Phosphopantetheine adenylyltransferase (164 aa).

Ser9 lines the substrate pocket. Residues 9–10 (SF) and His17 contribute to the ATP site. Substrate is bound by residues Lys41, Leu73, and Lys87. Residues 88–90 (GLR), Glu98, and 123–129 (YSYISSS) each bind ATP.

The protein belongs to the bacterial CoaD family. In terms of assembly, homohexamer. Mg(2+) is required as a cofactor.

Its subcellular location is the cytoplasm. The catalysed reaction is (R)-4'-phosphopantetheine + ATP + H(+) = 3'-dephospho-CoA + diphosphate. It functions in the pathway cofactor biosynthesis; coenzyme A biosynthesis; CoA from (R)-pantothenate: step 4/5. Its function is as follows. Reversibly transfers an adenylyl group from ATP to 4'-phosphopantetheine, yielding dephospho-CoA (dPCoA) and pyrophosphate. In Clostridium perfringens (strain SM101 / Type A), this protein is Phosphopantetheine adenylyltransferase.